The chain runs to 296 residues: Chelated iron transport system membrane protein YfeB (296 aa).

Positions 11 to 246 (LVVDNVTVTY…NLEMTFGGVL (236 aa)) constitute an ABC transporter domain. 44-51 (GVNGSGKS) contributes to the ATP binding site. Residues 276 to 296 (VFYGHTKNDPPAQSQSKEQNS) are disordered. Residues 286–296 (PAQSQSKEQNS) are compositionally biased toward polar residues.

The protein belongs to the ABC transporter superfamily.

It localises to the cell inner membrane. In terms of biological role, part of an ATP-driven transport system YfeABCD for chelated iron. The polypeptide is Chelated iron transport system membrane protein YfeB (yfeB) (Yersinia pestis).